The chain runs to 103 residues: Large ribosomal subunit protein uL23 (103 aa).

It belongs to the universal ribosomal protein uL23 family. In terms of assembly, part of the 50S ribosomal subunit. Contacts protein L29, and trigger factor when it is bound to the ribosome.

In terms of biological role, one of the early assembly proteins it binds 23S rRNA. One of the proteins that surrounds the polypeptide exit tunnel on the outside of the ribosome. Forms the main docking site for trigger factor binding to the ribosome. The sequence is that of Large ribosomal subunit protein uL23 from Chlorobium luteolum (strain DSM 273 / BCRC 81028 / 2530) (Pelodictyon luteolum).